A 224-amino-acid chain; its full sequence is Putative gastrointestinal growth factor xP4 (224 aa).

The signal sequence occupies residues 1–17 (MANSVFWAIAVALVLGA). P-type domains lie at 25–68 (YRCG…YTPW), 73–117 (TICN…YQPI), 123–167 (RDCS…FKPE), and 173–216 (LQCA…FYPD). Intrachain disulfides connect Cys27/Cys53, Cys37/Cys52, Cys47/Cys64, Cys75/Cys102, Cys86/Cys101, Cys96/Cys113, Cys125/Cys152, Cys136/Cys151, Cys146/Cys163, Cys175/Cys201, Cys185/Cys200, and Cys195/Cys212. A glycan (N-linked (GlcNAc...) asparagine) is linked at Asn104.

Post-translationally, glycosylated. Stomach mucosa.

It is found in the secreted. May act as a growth factor. The protein is Putative gastrointestinal growth factor xP4 (p4) of Xenopus laevis (African clawed frog).